The sequence spans 514 residues: Membrane-bound lytic murein transglycosylase F (514 aa).

Positions 1 to 30 (MKKLKINYLFIGILTLLLAAALWPSIPWFG) are cleaved as a signal peptide. Residues 31–269 (KTENHIAAIQ…RIEEKYLGHG (239 aa)) form a non-LT domain region. The tract at residues 270 to 514 (DDFDYVDTRS…LFTPQKKEEK (245 aa)) is LT domain. Residue Glu-314 is part of the active site.

It in the N-terminal section; belongs to the bacterial solute-binding protein 3 family. In the C-terminal section; belongs to the transglycosylase Slt family.

The protein resides in the cell outer membrane. The enzyme catalyses Exolytic cleavage of the (1-&gt;4)-beta-glycosidic linkage between N-acetylmuramic acid (MurNAc) and N-acetylglucosamine (GlcNAc) residues in peptidoglycan, from either the reducing or the non-reducing ends of the peptidoglycan chains, with concomitant formation of a 1,6-anhydrobond in the MurNAc residue.. Murein-degrading enzyme that degrades murein glycan strands and insoluble, high-molecular weight murein sacculi, with the concomitant formation of a 1,6-anhydromuramoyl product. Lytic transglycosylases (LTs) play an integral role in the metabolism of the peptidoglycan (PG) sacculus. Their lytic action creates space within the PG sacculus to allow for its expansion as well as for the insertion of various structures such as secretion systems and flagella. In Salmonella typhimurium (strain LT2 / SGSC1412 / ATCC 700720), this protein is Membrane-bound lytic murein transglycosylase F.